We begin with the raw amino-acid sequence, 119 residues long: Small ribosomal subunit protein uS13 (119 aa).

Residues 92–119 (RRGLPVRGQQTQTNARTRKGPRRGPASR) form a disordered region.

The protein belongs to the universal ribosomal protein uS13 family. In terms of assembly, part of the 30S ribosomal subunit. Forms a loose heterodimer with protein S19. Forms two bridges to the 50S subunit in the 70S ribosome.

Located at the top of the head of the 30S subunit, it contacts several helices of the 16S rRNA. In the 70S ribosome it contacts the 23S rRNA (bridge B1a) and protein L5 of the 50S subunit (bridge B1b), connecting the 2 subunits; these bridges are implicated in subunit movement. Contacts the tRNAs in the A and P-sites. The polypeptide is Small ribosomal subunit protein uS13 (Halorhodospira halophila (strain DSM 244 / SL1) (Ectothiorhodospira halophila (strain DSM 244 / SL1))).